A 363-amino-acid polypeptide reads, in one-letter code: UDP-3-O-acylglucosamine N-acyltransferase (363 aa).

The Proton acceptor role is filled by His-266.

Belongs to the transferase hexapeptide repeat family. LpxD subfamily. As to quaternary structure, homotrimer.

It catalyses the reaction a UDP-3-O-[(3R)-3-hydroxyacyl]-alpha-D-glucosamine + a (3R)-hydroxyacyl-[ACP] = a UDP-2-N,3-O-bis[(3R)-3-hydroxyacyl]-alpha-D-glucosamine + holo-[ACP] + H(+). Its pathway is bacterial outer membrane biogenesis; LPS lipid A biosynthesis. Its function is as follows. Catalyzes the N-acylation of UDP-3-O-acylglucosamine using 3-hydroxyacyl-ACP as the acyl donor. Is involved in the biosynthesis of lipid A, a phosphorylated glycolipid that anchors the lipopolysaccharide to the outer membrane of the cell. The protein is UDP-3-O-acylglucosamine N-acyltransferase of Bordetella bronchiseptica (strain ATCC BAA-588 / NCTC 13252 / RB50) (Alcaligenes bronchisepticus).